We begin with the raw amino-acid sequence, 157 residues long: Ribosomal RNA large subunit methyltransferase H (157 aa).

S-adenosyl-L-methionine contacts are provided by residues Leu73, Gly104, and 123–128; that span reads LGPLTL.

This sequence belongs to the RNA methyltransferase RlmH family. In terms of assembly, homodimer.

It localises to the cytoplasm. It catalyses the reaction pseudouridine(1915) in 23S rRNA + S-adenosyl-L-methionine = N(3)-methylpseudouridine(1915) in 23S rRNA + S-adenosyl-L-homocysteine + H(+). Specifically methylates the pseudouridine at position 1915 (m3Psi1915) in 23S rRNA. This is Ribosomal RNA large subunit methyltransferase H from Xylella fastidiosa (strain M12).